Consider the following 634-residue polypeptide: Nicotinic receptor-associated protein 1 (634 aa).

C2 domains are found at residues 1–141 and 159–295; these read MNQP…KAHL and KTGS…EILL. Residues leucine 29, aspartate 30, aspartate 36, aspartate 105, aspartate 107, aspartate 119, aspartate 189, aspartate 195, aspartate 251, aspartate 253, and aspartate 271 each contribute to the Ca(2+) site. In terms of domain architecture, VWFA spans 338–557; the sequence is DFAVAVDFTA…LDPDVIQENL (220 aa). Positions 576 to 603 are disordered; sequence RGFQPRPVDDPWRRDSPPPEFDPILDGT. Residues 582-592 are compositionally biased toward basic and acidic residues; it reads PVDDPWRRDSP.

Belongs to the copine family. As to quaternary structure, interacts with nicotinic acetylcholine receptor. Ca(2+) serves as cofactor. In terms of tissue distribution, expressed in head and tail neurons, ventral cord moto-neurons, body wall muscles and hypodermal cells of the vulva.

The protein resides in the cell membrane. In terms of biological role, exhibits calcium-dependent phospholipid binding properties. May function in membrane trafficking. Regulates synaptic levels of nicotinic acetylcholine receptor subunit lev-1 and unc-38 in the nerve cord. Involved in nicotinic acetylcholine receptor (nAChR)-mediated sensitivity to nicotine and levamisole. Affects directional sperm motility. The chain is Nicotinic receptor-associated protein 1 (nra-1) from Caenorhabditis elegans.